Reading from the N-terminus, the 354-residue chain is Replication-associated protein (354 aa).

Residues Ser-11–Phe-114 enclose the CRESS-DNA virus Rep endonuclease domain. The RCR-1 signature appears at Phe-18 to Tyr-21. The a divalent metal cation site is built by Glu-52 and His-62. An RCR-2 motif is present at residues Cys-60–Ile-65. The active-site For DNA cleavage activity is the Tyr-100. Positions Tyr-100–Lys-103 match the RCR-3 motif. Glu-104 lines the a divalent metal cation pocket. Residues Ser-175–Phe-187 are oligomerization. ATP is bound at residue Gly-228–Ser-235. Residues Val-251–Pro-269 form a transactivation region. Positions Lys-291–Ser-302 match the Nuclear localization signal motif.

It belongs to the geminiviridae Rep protein family. Homooligomer. Rep binds to repeated DNA motifs (iterons). Forms the O-complex, which is a Rep-DNA complex involved in the initiation of RCR. Part of the C- and V-complexes which are RepA-Rep-DNA complexes involved in the c-sense and v-sense transcription. It depends on Mg(2+) as a cofactor. Requires Mn(2+) as cofactor.

It is found in the host nucleus. Essential for the replication of viral ssDNA. The closed circular ssDNA genome is first converted to a superhelical dsDNA. Rep binds a specific region at the genome origin of replication. It introduces an endonucleolytic nick within the conserved sequence 5'-TAATATTAC-3' in the intergenic region of the genome present in all geminiviruses, thereby initiating the rolling circle replication (RCR). Following cleavage, binds covalently to the 5'-phosphate of DNA as a tyrosyl ester. The cleavage gives rise to a free 3'-OH that serves as a primer for the cellular DNA polymerase. The polymerase synthesizes the (+) strand DNA by rolling circle mechanism. After one round of replication, a Rep-catalyzed nucleotidyl transfer reaction releases a circular single-stranded virus genome, thereby terminating the replication. Displays origin-specific DNA cleavage, nucleotidyl transferase, ATPase and helicase activities. Acts as an inhibitor of C-sense gene transcription. The chain is Replication-associated protein from Maize streak virus genotype C (isolate Set) (MSV).